Consider the following 545-residue polypeptide: E3 ubiquitin-protein ligase ipaH9.8 (545 aa).

The interval 1-242 is interaction with target proteins; that stretch reads MLPINNNFSL…YHGPRIYFSM (242 aa). LRR repeat units follow at residues 57–77, 78–99, 100–117, 118–139, 140–157, 158–179, 182–203, and 205–228; these read NSDE…NLPA, QITL…PVTL, KKLY…VLPP, ALES…PDSL, LTMN…SLPL, ALKN…SEGN, VVRE…ILNL, and NECS…QRLT. The interval 243-250 is linker; the sequence is SDGQQNTL. The segment at 251-545 is E3 ubiquitin-protein ligase catalytic domain; that stretch reads HRPLADAVTA…SENGSQLHHS (295 aa). Residues 253-545 enclose the NEL domain; it reads PLADAVTAWF…SENGSQLHHS (293 aa). The active-site Glycyl thioester intermediate is the Cys-337.

The protein belongs to the LRR-containing bacterial E3 ligase family. As to quaternary structure, also interacts with human and mouse U2AF1 (U2AF35). Post-translationally, ubiquitinated in the presence of host E1 ubiquitin-activating enzyme, E2 ubiquitin-conjugating enzyme and ubiquitin.

Its subcellular location is the secreted. The protein localises to the host cytoplasm. It is found in the host nucleus. The catalysed reaction is S-ubiquitinyl-[E2 ubiquitin-conjugating enzyme]-L-cysteine + [acceptor protein]-L-lysine = [E2 ubiquitin-conjugating enzyme]-L-cysteine + N(6)-ubiquitinyl-[acceptor protein]-L-lysine.. Exists in an autoinhibited state in the absence of substrate protein, due to interactions of the leucine-rich repeats with NEL domain. Is activated upon binding to a substrate protein. Effector E3 ubiquitin ligase that interferes with host's ubiquitination pathway and modulates the acute inflammatory responses, thus facilitating bacterial colonization within the host cell. Interacts with IKBKG (NEMO) and TNIP1 (ABIN-1), a ubiquitin-binding adapter protein, which results in TNIP1-dependent 'Lys-27'-linked polyubiquitination of IKBKG. Consequently, polyubiquitinated IKBKG undergoes proteasome-dependent degradation, which perturbs NF-kappa-B activation during bacterial infection. Mediates polyubiquitination of host U2AF1, leading to its proteasomal degradation. Catalyzes 'Lys-48'-linked polyubiquitination and subsequent degradation of a subset of host guanylate-binding proteins (GBP1, GBP2, GBP4 and GBP6), thereby suppressing host cell defense. In contrast, host GBP3 and GBP7 are not ubiquitinated by IpaH9.8. Uses UBE2D2 (UBCH5B) as an E2 ubiquitin-conjugating enzyme. In Shigella boydii serotype 4 (strain Sb227), this protein is E3 ubiquitin-protein ligase ipaH9.8 (ipaH9.8).